A 523-amino-acid chain; its full sequence is Ribosomal protein uS12 methylthiotransferase RimO (523 aa).

The 128-residue stretch at 7–134 (RRVALITLGC…IATHLAAVLA (128 aa)) folds into the MTTase N-terminal domain. Positions 16, 52, 97, 192, 196, and 199 each coordinate [4Fe-4S] cluster. The 232-residue stretch at 178 to 409 (LTAGPVAVLK…DLVEQLTAAR (232 aa)) folds into the Radical SAM core domain. The TRAM domain occupies 411-492 (DARIGSRVQV…GVDLIAEFIA (82 aa)).

Belongs to the methylthiotransferase family. RimO subfamily. The cofactor is [4Fe-4S] cluster.

It localises to the cytoplasm. The enzyme catalyses L-aspartate(89)-[ribosomal protein uS12]-hydrogen + (sulfur carrier)-SH + AH2 + 2 S-adenosyl-L-methionine = 3-methylsulfanyl-L-aspartate(89)-[ribosomal protein uS12]-hydrogen + (sulfur carrier)-H + 5'-deoxyadenosine + L-methionine + A + S-adenosyl-L-homocysteine + 2 H(+). Its function is as follows. Catalyzes the methylthiolation of an aspartic acid residue of ribosomal protein uS12. The chain is Ribosomal protein uS12 methylthiotransferase RimO from Frankia casuarinae (strain DSM 45818 / CECT 9043 / HFP020203 / CcI3).